The sequence spans 381 residues: Alkanesulfonate monooxygenase (381 aa).

This sequence belongs to the SsuD family. In terms of assembly, homotetramer.

The catalysed reaction is an alkanesulfonate + FMNH2 + O2 = an aldehyde + FMN + sulfite + H2O + 2 H(+). Catalyzes the desulfonation of aliphatic sulfonates. The protein is Alkanesulfonate monooxygenase of Escherichia coli O6:K15:H31 (strain 536 / UPEC).